A 360-amino-acid chain; its full sequence is Ferredoxin--NADP reductase (360 aa).

FAD contacts are provided by threonine 25, glutamate 44, glutamine 52, tyrosine 57, valine 97, phenylalanine 132, aspartate 298, and serine 339.

The protein belongs to the ferredoxin--NADP reductase type 2 family. Homodimer. The cofactor is FAD.

The enzyme catalyses 2 reduced [2Fe-2S]-[ferredoxin] + NADP(+) + H(+) = 2 oxidized [2Fe-2S]-[ferredoxin] + NADPH. The protein is Ferredoxin--NADP reductase of Chlorobaculum tepidum (strain ATCC 49652 / DSM 12025 / NBRC 103806 / TLS) (Chlorobium tepidum).